The sequence spans 60 residues: Large ribosomal subunit protein bL32 (60 aa).

Residues 1–16 show a composition bias toward basic residues; sequence MAVPRRKTSPSRRGMR. Residues 1 to 60 are disordered; sequence MAVPRRKTSPSRRGMRRSADAIKRPTYVEDKDSGELRRPHHLDLKTGMYKGRQVLKKKDS. Residues 17–44 are compositionally biased toward basic and acidic residues; that stretch reads RSADAIKRPTYVEDKDSGELRRPHHLDL.

The sequence is that of Large ribosomal subunit protein bL32 from Rhodopseudomonas palustris (strain ATCC BAA-98 / CGA009).